Consider the following 256-residue polypeptide: Imidazole glycerol phosphate synthase subunit HisF (256 aa).

Catalysis depends on residues D12 and D131.

It belongs to the HisA/HisF family. In terms of assembly, heterodimer of HisH and HisF.

It is found in the cytoplasm. The catalysed reaction is 5-[(5-phospho-1-deoxy-D-ribulos-1-ylimino)methylamino]-1-(5-phospho-beta-D-ribosyl)imidazole-4-carboxamide + L-glutamine = D-erythro-1-(imidazol-4-yl)glycerol 3-phosphate + 5-amino-1-(5-phospho-beta-D-ribosyl)imidazole-4-carboxamide + L-glutamate + H(+). Its pathway is amino-acid biosynthesis; L-histidine biosynthesis; L-histidine from 5-phospho-alpha-D-ribose 1-diphosphate: step 5/9. IGPS catalyzes the conversion of PRFAR and glutamine to IGP, AICAR and glutamate. The HisF subunit catalyzes the cyclization activity that produces IGP and AICAR from PRFAR using the ammonia provided by the HisH subunit. This chain is Imidazole glycerol phosphate synthase subunit HisF, found in Bifidobacterium adolescentis (strain ATCC 15703 / DSM 20083 / NCTC 11814 / E194a).